Here is a 355-residue protein sequence, read N- to C-terminus: MHC class I-like protein MILL2 (355 aa).

Positions 1 to 29 (MKASSGKPREFRPAVLLLILGLLLRDSRG) are cleaved as a signal peptide. The interval 46 to 137 (RLTRTHTLRY…VINQKSQEEG (92 aa)) is alpha-1. 3 cysteine pairs are disulfide-bonded: C96-C107, C147-C210, and C249-C306. N-linked (GlcNAc...) asparagine glycosylation is found at N104 and N152. The interval 138–229 (LHTLQATLGC…SLRNGLQDTG (92 aa)) is alpha-2. The segment at 230-323 (PPMVTVTCRN…SIMQTAVSGH (94 aa)) is alpha-3. The Ig-like C1-type domain occupies 231-321 (PMVTVTCRNY…NHSIMQTAVS (91 aa)). N312 is a glycosylation site (N-linked (GlcNAc...) asparagine). Positions 324 to 329 (AAEDSQ) are connecting peptide. D330 is lipidated: GPI-anchor amidated aspartate. Positions 331-355 (VASSATASAGSALPVVLAVALARAN) are cleaved as a propeptide — removed in mature form.

It belongs to the MHC class I family. As to quaternary structure, heterodimer with B2M (beta-2-microglobulin). N-glycosylated. In terms of tissue distribution, ubiquitously expressed in neonatal and adult tissues.

The protein localises to the cell membrane. Binds to heparan sulfate proteoglycans on the surface of fibroblast (NIH-3T3) cells. This is MHC class I-like protein MILL2 from Mus musculus (Mouse).